The sequence spans 554 residues: HMG box-containing protein 4 (554 aa).

3 disordered regions span residues 14–34 (RGMEDVGLAAGRSQREKKRSY), 47–368 (QVRK…SAYQ), and 418–468 (HKQN…SPAK). Residues 117-127 (TSPQVDTSTTH) show a composition bias toward polar residues. The segment covering 221 to 230 (TGREETESRS) has biased composition (basic and acidic residues). The span at 242-255 (PRSGGTPDSASSTG) shows a compositional bias: polar residues. Over residues 272–300 (MKKKKKSKKSKKKKDKHKDEKHRKHSKSK) the composition is skewed to basic residues. Pro residues predominate over residues 317–335 (LPSPPPPTATTPTSPPSVP). The segment covering 342–358 (HAEEQLDKKKKKEDPEK) has biased composition (basic and acidic residues). A DNA-binding region (HMG box) is located at residues 360 to 428 (KKKNMSAYQV…KQNKAEATTV (69 aa)). Residues 434–466 (SSESAARSKGSSSGLPSPNKKSPTSVVSFSTSP) show a composition bias toward low complexity.

As to quaternary structure, interacts with nlk.2.

The protein localises to the nucleus. Its function is as follows. Negatively regulates Wnt/beta-catenin signaling during development. The polypeptide is HMG box-containing protein 4 (hmgxb4) (Xenopus tropicalis (Western clawed frog)).